We begin with the raw amino-acid sequence, 658 residues long: Serine/threonine-protein kinase shk1/pak1 (658 aa).

Disordered stretches follow at residues 1-21, 39-104, 126-147, and 213-365; these read MERG…ITPI, RKLK…SYDE, GGSS…STVI, and GAKP…QQSN. Positions 66–98 are enriched in polar residues; that stretch reads PLSQSRTTVSRVSLGSRQHSSSSIRKLQTNVSD. Residues 129 to 140 show a composition bias toward low complexity; it reads SPTSSYGSGSAS. The CRIB domain occupies 147–160; sequence ISSPFDPKHVTHVG. Low complexity-rich tracts occupy residues 226–254 and 262–272; these read PLLS…LYPS and ASSSSSPLLSS. Residues 273 to 300 are compositionally biased toward polar residues; sequence QTVKTTTSNASRQPSPLVSSKSTDNIIR. A phosphoserine mark is found at Ser-301 and Ser-303. Residues 386-637 form the Protein kinase domain; that stretch reads YRNFVKIGQG…SGELLRHPFL (252 aa). ATP-binding positions include 392-400 and Lys-415; that span reads IGQGASGDV. The active-site Proton acceptor is the Asp-505.

This sequence belongs to the protein kinase superfamily. STE Ser/Thr protein kinase family. STE20 subfamily. Forms an activated complex with GTP-bound ras-like cdc42. Interacts with skb1 and the SH3 domain of skb5 via its amino-terminal regulatory domain. Skb1, cdc42 and shk1 are able to form a ternary complex in vivo. Interacts with rga8 and may interact with byr2. Autophosphorylated on serine residues.

It is found in the cytoplasm. The protein localises to the cytoskeleton. Its subcellular location is the spindle. It catalyses the reaction L-seryl-[protein] + ATP = O-phospho-L-seryl-[protein] + ADP + H(+). The catalysed reaction is L-threonyl-[protein] + ATP = O-phospho-L-threonyl-[protein] + ADP + H(+). Its function is as follows. MAP4K component of the MAPK pathway required for the mating pheromone response. Phosphorylates histone H2B to form H2BS10ph. Phosphorylates tea1. Required for skb1-dependent mitotic inhibitory function. Regulates microtubule dynamics and cell polarity. This is Serine/threonine-protein kinase shk1/pak1 (shk1) from Schizosaccharomyces pombe (strain 972 / ATCC 24843) (Fission yeast).